Reading from the N-terminus, the 445-residue chain is Trigger factor (445 aa).

The 86-residue stretch at 162–247 (GDQVTIDAIG…IKAVHTAEPT (86 aa)) folds into the PPIase FKBP-type domain.

Belongs to the FKBP-type PPIase family. Tig subfamily.

The protein resides in the cytoplasm. It catalyses the reaction [protein]-peptidylproline (omega=180) = [protein]-peptidylproline (omega=0). Its function is as follows. Involved in protein export. Acts as a chaperone by maintaining the newly synthesized protein in an open conformation. Functions as a peptidyl-prolyl cis-trans isomerase. The protein is Trigger factor of Rickettsia conorii (strain ATCC VR-613 / Malish 7).